The primary structure comprises 489 residues: Tripartite motif-containing protein 10 (489 aa).

The RING-type zinc finger occupies 16–61; the sequence is CPVCQGTLREPVTIDCGHNFCRVCLTRYLEITSPDPEEPPTCPLCK. A B box-type zinc finger spans residues 94-135; it reads DEEDVCPEHGEKVYFFCEDDEMQLCVVCREAWEHRAHTVRFL. Zn(2+)-binding residues include cysteine 99, histidine 102, cysteine 121, and histidine 127. Positions 142–245 form a coiled coil; it reads YREQIQKCLE…IEELEEKKER (104 aa). The B30.2/SPRY domain occupies 292–486; it reads REMKMFLEKL…FSLSSQEGAA (195 aa).

The protein belongs to the TRIM/RBCC family. As to quaternary structure, interacts with IFNAR1; this interaction prevents association of IFNAR1 with TYK2.

The protein localises to the cytoplasm. E3 ligase that plays an essential role in the differentiation and survival of terminal erythroid cells. May directly bind to PTEN and promote its ubiquitination, resulting in its proteasomal degradation and activation of hypertrophic signaling. In addition, plays a role in immune response regulation by repressing the phosphorylation of STAT1 and STAT2 in the interferon/JAK/STAT signaling pathway independent of its E3 ligase activity. Mechanistically, interacts with the intracellular domain of IFNAR1 and thereby inhibits the association between TYK2 and IFNAR1. The sequence is that of Tripartite motif-containing protein 10 (TRIM10) from Bos taurus (Bovine).